Consider the following 281-residue polypeptide: tRNA N(3)-cytidine methyltransferase METTL8, mitochondrial (281 aa).

A mitochondrion-targeting transit peptide spans 1-22 (MNVIWRSCICRLRQGKVPHRCQ). K80 participates in a covalent cross-link: Glycyl lysine isopeptide (Lys-Gly) (interchain with G-Cter in SUMO). Residues W89 and Y93 each coordinate S-adenosyl-L-methionine. The span at 139–151 (RTQGTETHCQESF) shows a compositional bias: polar residues. The tract at residues 139 to 180 (RTQGTETHCQESFVSPEPGSRGRSAPDPDLEEYSKGPGKTEP) is disordered. S-adenosyl-L-methionine is bound by residues G194, D220, and D246.

This sequence belongs to the methyltransferase superfamily. METL family. As to quaternary structure, interacts with EP300. In terms of tissue distribution, absent in embryonic lung but is induced in a fibroblast cell line by stretch. As to expression, expressed in undifferentiated progenitor cells, while its expression is inhibited by stretch. Absent in undifferentiated embryonic lung mesenchymal cells, but expression is induced by stretch. In terms of tissue distribution, expressed in mature adipose tissue.

The protein resides in the mitochondrion. Its subcellular location is the cytoplasm. It localises to the nucleus. The catalysed reaction is cytidine(32) in tRNA(Ser) + S-adenosyl-L-methionine = N(3)-methylcytidine(32) in tRNA(Ser) + S-adenosyl-L-homocysteine + H(+). It carries out the reaction cytidine(32) in tRNA(Thr) + S-adenosyl-L-methionine = N(3)-methylcytidine(32) in tRNA(Thr) + S-adenosyl-L-homocysteine + H(+). The enzyme catalyses a cytidine in mRNA + S-adenosyl-L-methionine = an N(3)-methylcytidine in mRNA + S-adenosyl-L-homocysteine + H(+). In terms of biological role, mitochondrial S-adenosyl-L-methionine-dependent methyltransferase that mediates N(3)-methylcytidine modification of residue 32 of the tRNA anticodon loop of mitochondrial tRNA(Ser)(UCN) and tRNA(Thr). N(3)-methylcytidine methylation modification regulates mitochondrial translation efficiency and is required for activity of the respiratory chain. N(3)-methylcytidine methylation of mitochondrial tRNA(Ser)(UCN) requires the formation of N(6)-dimethylallyladenosine(37) (i6A37) by TRIT1 as prerequisite. May also mediate N(3)-methylcytidine modification of mRNAs. The existence of N(3)-methylcytidine modification on mRNAs is however unclear, and additional evidences are required to confirm the role of the N(3)-methylcytidine-specific mRNA methyltransferase activity of METTL8 in vivo. Overexpression in lung progenitor cells stimulates smooth muscle-specific gene expression and suppresses adipogenic gene expression. Its function is as follows. Stimulates adipogenesis. This Mus musculus (Mouse) protein is tRNA N(3)-cytidine methyltransferase METTL8, mitochondrial.